Consider the following 388-residue polypeptide: Succinate--CoA ligase [ADP-forming] subunit beta (388 aa).

The ATP-grasp domain occupies 9 to 244 (KEIFRSMGVA…LEEEDPKEIE (236 aa)). Residues Lys-46, 53–55 (GRG), Glu-99, Cys-102, and Glu-107 each bind ATP. 2 residues coordinate Mg(2+): Asn-199 and Asp-213. Substrate contacts are provided by residues Asn-264 and 321-323 (GIM).

The protein belongs to the succinate/malate CoA ligase beta subunit family. As to quaternary structure, heterotetramer of two alpha and two beta subunits. Mg(2+) serves as cofactor.

It carries out the reaction succinate + ATP + CoA = succinyl-CoA + ADP + phosphate. The catalysed reaction is GTP + succinate + CoA = succinyl-CoA + GDP + phosphate. It participates in carbohydrate metabolism; tricarboxylic acid cycle; succinate from succinyl-CoA (ligase route): step 1/1. Functionally, succinyl-CoA synthetase functions in the citric acid cycle (TCA), coupling the hydrolysis of succinyl-CoA to the synthesis of either ATP or GTP and thus represents the only step of substrate-level phosphorylation in the TCA. The beta subunit provides nucleotide specificity of the enzyme and binds the substrate succinate, while the binding sites for coenzyme A and phosphate are found in the alpha subunit. In Staphylococcus haemolyticus (strain JCSC1435), this protein is Succinate--CoA ligase [ADP-forming] subunit beta.